Consider the following 185-residue polypeptide: C-type lectin domain family 5 member A (185 aa).

At 1–4 the chain is on the cytoplasmic side; that stretch reads MNWH. The helical; Signal-anchor for type II membrane protein transmembrane segment at 5–27 threads the bilayer; sequence MIISGLIVVVLKIVGMTFFLLYF. Topologically, residues 28 to 185 are extracellular; that stretch reads PQIFGEHNVS…YRSICEKSAQ (158 aa). N-linked (GlcNAc...) asparagine glycosylation is found at asparagine 35 and asparagine 55. Cysteine 68 and cysteine 79 are disulfide-bonded. Positions 75 to 181 constitute a C-type lectin domain; it reads HQGRCFFLST…CDVNYRSICE (107 aa). 4 N-linked (GlcNAc...) asparagine glycosylation sites follow: asparagine 90, asparagine 117, asparagine 141, and asparagine 146. 2 cysteine pairs are disulfide-bonded: cysteine 96-cysteine 180 and cysteine 158-cysteine 172.

As to quaternary structure, monomer. Homodimer. The majority of CLEC5A is expressed as a monomeric form on macrophages. Interacts with TYROBP/DAP12. The interaction with TYROBP is required for CLEC5 cell surface expression. Interacts with HCST/DAP10. Forms a CLEC5A/TYROBP/HCST trimolecular complex depending almost solely on TYROBP. Post-translationally, N-glycosylated. Contains sialic acid residues. In terms of tissue distribution, constitutively expressed in monocytes and macrophages.

The protein localises to the cell membrane. In terms of biological role, functions as a positive regulator of osteoclastogenesis. Cell surface receptor that signals via TYROBP. Regulates inflammatory responses. This Sus scrofa (Pig) protein is C-type lectin domain family 5 member A (CLEC5A).